We begin with the raw amino-acid sequence, 527 residues long: Bifunctional purine biosynthesis protein PurH (527 aa).

Residues 1–144 form the MGS-like domain; the sequence is MNRRALISVS…KNHESVAIIV (144 aa).

It belongs to the PurH family.

It carries out the reaction (6R)-10-formyltetrahydrofolate + 5-amino-1-(5-phospho-beta-D-ribosyl)imidazole-4-carboxamide = 5-formamido-1-(5-phospho-D-ribosyl)imidazole-4-carboxamide + (6S)-5,6,7,8-tetrahydrofolate. The enzyme catalyses IMP + H2O = 5-formamido-1-(5-phospho-D-ribosyl)imidazole-4-carboxamide. Its pathway is purine metabolism; IMP biosynthesis via de novo pathway; 5-formamido-1-(5-phospho-D-ribosyl)imidazole-4-carboxamide from 5-amino-1-(5-phospho-D-ribosyl)imidazole-4-carboxamide (10-formyl THF route): step 1/1. It participates in purine metabolism; IMP biosynthesis via de novo pathway; IMP from 5-formamido-1-(5-phospho-D-ribosyl)imidazole-4-carboxamide: step 1/1. This Heliobacterium modesticaldum (strain ATCC 51547 / Ice1) protein is Bifunctional purine biosynthesis protein PurH.